Here is a 485-residue protein sequence, read N- to C-terminus: Membrane-bound lytic murein transglycosylase F (485 aa).

An N-terminal signal peptide occupies residues 1–29 (MFAHTALRQRCAKWLFATGLFLLLGACVE). Positions 30 to 267 (KPSTLERVKE…RLKDRYYGHV (238 aa)) are non-LT domain. The interval 268 to 485 (DVLGYVGAYT…DKPADQSPPM (218 aa)) is LT domain. Residue glutamate 314 is part of the active site. Residues 465-485 (EGNLHVPGVNKDKPADQSPPM) are disordered.

The protein in the N-terminal section; belongs to the bacterial solute-binding protein 3 family. It in the C-terminal section; belongs to the transglycosylase Slt family.

The protein localises to the cell outer membrane. The catalysed reaction is Exolytic cleavage of the (1-&gt;4)-beta-glycosidic linkage between N-acetylmuramic acid (MurNAc) and N-acetylglucosamine (GlcNAc) residues in peptidoglycan, from either the reducing or the non-reducing ends of the peptidoglycan chains, with concomitant formation of a 1,6-anhydrobond in the MurNAc residue.. Its function is as follows. Murein-degrading enzyme that degrades murein glycan strands and insoluble, high-molecular weight murein sacculi, with the concomitant formation of a 1,6-anhydromuramoyl product. Lytic transglycosylases (LTs) play an integral role in the metabolism of the peptidoglycan (PG) sacculus. Their lytic action creates space within the PG sacculus to allow for its expansion as well as for the insertion of various structures such as secretion systems and flagella. The sequence is that of Membrane-bound lytic murein transglycosylase F from Pseudomonas putida (strain GB-1).